The following is a 283-amino-acid chain: Urease accessory protein UreD 1 (283 aa).

It belongs to the UreD family. UreD, UreF and UreG form a complex that acts as a GTP-hydrolysis-dependent molecular chaperone, activating the urease apoprotein by helping to assemble the nickel containing metallocenter of UreC. The UreE protein probably delivers the nickel.

Its subcellular location is the cytoplasm. In terms of biological role, required for maturation of urease via the functional incorporation of the urease nickel metallocenter. The chain is Urease accessory protein UreD 1 from Brucella anthropi (strain ATCC 49188 / DSM 6882 / CCUG 24695 / JCM 21032 / LMG 3331 / NBRC 15819 / NCTC 12168 / Alc 37) (Ochrobactrum anthropi).